A 252-amino-acid polypeptide reads, in one-letter code: Imidazole glycerol phosphate synthase subunit HisF (252 aa).

Catalysis depends on residues Asp11 and Asp130.

This sequence belongs to the HisA/HisF family. In terms of assembly, heterodimer of HisH and HisF.

It is found in the cytoplasm. The catalysed reaction is 5-[(5-phospho-1-deoxy-D-ribulos-1-ylimino)methylamino]-1-(5-phospho-beta-D-ribosyl)imidazole-4-carboxamide + L-glutamine = D-erythro-1-(imidazol-4-yl)glycerol 3-phosphate + 5-amino-1-(5-phospho-beta-D-ribosyl)imidazole-4-carboxamide + L-glutamate + H(+). Its pathway is amino-acid biosynthesis; L-histidine biosynthesis; L-histidine from 5-phospho-alpha-D-ribose 1-diphosphate: step 5/9. IGPS catalyzes the conversion of PRFAR and glutamine to IGP, AICAR and glutamate. The HisF subunit catalyzes the cyclization activity that produces IGP and AICAR from PRFAR using the ammonia provided by the HisH subunit. The protein is Imidazole glycerol phosphate synthase subunit HisF of Geobacillus sp. (strain WCH70).